Here is a 370-residue protein sequence, read N- to C-terminus: MGAQPGEPQNTCSRIQTLFRRVKTLLIKAPPPPQPPPPPPSWNPGCTHVYGYAFGHMHDNNLEHLPSQQVLDTGEQLMVPVEVLEVDNKEALWKFLLSGAMAGAVSRTGTAPLDRAKVYMQVYSSKTNFTNLLGGLQSMVQEGGFRSLWRGNGINVLKIAPEYAIKFSVFEQCKNYFCGIQGSPPFQERLLAGSLAVAISQTLINPMEVLKTRLTLRRTGQYKGLLDCARQILQREGTRALYRGYLPNMLGIIPYACTDLAVYEMLQCFWVKSGRDMGDPSGLVSLSSVTLSTTCGQMASYPLTLVRTRMQAQDTVEGSNPTMRGVLQRILAQQGWLGLYRGMTPTLLKVLPAGGISYVVYEAMKKTLGI.

Solcar repeat units lie at residues 90-176 (EALW…CKNY), 184-269 (PPFQ…LQCF), and 280-367 (PSGL…MKKT). 6 helical membrane-spanning segments follow: residues 96–113 (LLSGAMAGAVSRTGTAPL), 151–170 (GNGINVLKIAPEYAIKFSVF), 194–207 (SLAVAISQTLINPM), 245–263 (YLPNMLGIIPYACTDLAVY), 282–306 (GLVSLSSVTLSTTCGQMASYPLTLV), and 342–361 (GMTPTLLKVLPAGGISYVVY).

Belongs to the mitochondrial carrier (TC 2.A.29) family.

Its subcellular location is the mitochondrion inner membrane. It carries out the reaction Mg(2+)(out) + phosphate(in) + ATP(out) = Mg(2+)(in) + phosphate(out) + ATP(in). The catalysed reaction is ADP(out) + phosphate(in) + H(+)(out) = ADP(in) + phosphate(out) + H(+)(in). Calcium-independent ATP-Mg/Pi exchanger that catalyzes the electroneutral exchange of Mg-ATP or free ADP against an hydrogenphosphate and participates in the net transport of adenine nucleotides across the mitochondria inner membrane. This is Mitochondrial carrier protein SCaMC-3L from Homo sapiens (Human).